The primary structure comprises 220 residues: MADS-box protein AGL24 (220 aa).

An MADS-box domain is found at 1–61; sequence MAREKIRIKK…GKLFEFSSSR (61 aa). Residues 87–177 form the K-box domain; it reads LRLENCNLSR…RDKLETLERA (91 aa). Residues 190–200 are compositionally biased toward polar residues; sequence SVTTNVSSYDS. The interval 190-220 is disordered; it reads SVTTNVSSYDSGTPLEDDSDTSLKLGLPSWE.

In terms of assembly, interacts with IMK3/MRLK. Forms a homodimer and heterodimer with SOC1, AP1 and SVP through MADS-box domain. Interacts with the SEU-LUG corepressor complex when complexed to AP1. Interacts with AGL15 and AGL16. Post-translationally, phosphorylated by IMK3. Induced by vernalization. In terms of tissue distribution, mostly expressed in shoot apical meristems, including floral meristems. Also detected in stems, seedlings, leaves, flowers and siliques, and, to a lower extent, in roots.

The protein localises to the nucleus. It is found in the cytoplasm. Its function is as follows. Transcription activator that mediates floral transition in response to vernalization. Promotes inflorescence fate in apical meristems. Acts in a dosage-dependent manner. Probably involved in the transduction of RLK-mediated signaling (e.g. IMK3 pathway). Together with AP1 and SVP, controls the identity of the floral meristem and regulates expression of class B, C and E genes. When associated with SOC1, mediates effect of gibberellins on flowering under short-day conditions, and regulates the expression of LEAFY (LFY), which links floral induction and floral development. Confers inflorescence characteristics to floral primordia and early flowering. The protein is MADS-box protein AGL24 (AGL24) of Arabidopsis thaliana (Mouse-ear cress).